A 471-amino-acid chain; its full sequence is Vanillate/3-O-methylgallate O-demethylase (471 aa).

A substrate-binding site is contributed by Y31. Q57 contacts (6S)-5,6,7,8-tetrahydrofolate. H60 is a substrate binding site. Positions 93 and 120 each coordinate (6S)-5,6,7,8-tetrahydrofolate. R122 lines the substrate pocket. (6S)-5,6,7,8-tetrahydrofolate contacts are provided by Q165 and E215. 247–250 (YPSN) provides a ligand contact to substrate. W256 serves as a coordination point for (6S)-5,6,7,8-tetrahydrofolate.

The protein belongs to the GcvT family. As to quaternary structure, homodimer.

The catalysed reaction is vanillate + (6S)-5,6,7,8-tetrahydrofolate = (6S)-5-methyl-5,6,7,8-tetrahydrofolate + 3,4-dihydroxybenzoate. It carries out the reaction 3-O-methylgallate + (6S)-5,6,7,8-tetrahydrofolate = 3,4,5-trihydroxybenzoate + (6S)-5-methyl-5,6,7,8-tetrahydrofolate. The protein operates within secondary metabolite metabolism; lignin degradation. Its function is as follows. Involved in the catabolism of vanillate and syringate. Catalyzes the transfer of a methyl moiety from vanillate or 3-O-methylgallate (3MGA) to tetrahydrofolate, forming protocatechuate (PCA) or gallate, respectively, and methyl-tetrahydrofolate. Has similar activities with both substrates. Cannot use syringate. Uses an ordered, sequential kinetic mechanism. The polypeptide is Vanillate/3-O-methylgallate O-demethylase (Sphingobium sp. (strain NBRC 103272 / SYK-6)).